A 329-amino-acid polypeptide reads, in one-letter code: Oxidoreductase sirO (329 aa).

Position 54 (Asp-54) interacts with NADP(+). Tyr-59 (proton donor) is an active-site residue. Residue His-118 coordinates substrate. Residues 148–149, Gln-174, 203–213, and 288–296 each bind NADP(+); these read SN, SPLCCGLLINA, and SSARQLEES.

The protein belongs to the aldo/keto reductase family. Aldo/keto reductase 2 subfamily.

Its pathway is mycotoxin biosynthesis. Its function is as follows. Oxidoreductase; part of the gene cluster that mediates the biosynthesis of sirodesmin PL, an epipolythiodioxopiperazine (ETP) characterized by a disulfide bridged cyclic dipeptide and that acts as a phytotoxin which is involved in the blackleg didease of canola. SirD catalyzes the O-prenylation of L-tyrosine (L-Tyr) in the presence of dimethylallyl diphosphate (DMAPP) to yield 4-O-dimethylallyl-L-Tyr, and therefore represents probably the first pathway-specific enzyme in the biosynthesis of sirodesmin PL. 4-O-dimethylallyl-L-Tyr, then undergoes condensation with L-Ser in a reaction catalyzed by the non-ribosomal peptide synthase sirP to form the diketopiperazine (DKP) backbone. Further bishydroxylation of the DKP performed by the cytochrome P450 monooxygenase sirC leads to the production of the intermediate phomamide. This step is essential to form the reactive thiol group required for toxicity of sirodesmin PL. The next steps of sirodesmin biosynthesis are not well understood yet, but some predictions could be made from intermediate compounds identification. Phomamide is converted into phomalizarine via oxidation, probably by sirT. Further oxidation, methylation (by sirM or sirN) and reduction steps convert phomalizarine to deacetyl sirodesmin. Finally, acetyltransferase sirH probably acetylates deacetyl sirodesmin to produce sirodesmin PL. This chain is Oxidoreductase sirO, found in Leptosphaeria maculans (Blackleg fungus).